The chain runs to 157 residues: Methylamine utilization protein MauL (157 aa).

It functions in the pathway one-carbon metabolism; methylamine degradation. Probably involved in TTQ prosthetic group biosynthesis. In Methylobacillus flagellatus (strain ATCC 51484 / DSM 6875 / VKM B-1610 / KT), this protein is Methylamine utilization protein MauL (mauL).